A 984-amino-acid chain; its full sequence is uncharacterized protein (984 aa).

This is an uncharacterized protein from Ostreid herpesvirus 1 (isolate France) (OsHV-1).